We begin with the raw amino-acid sequence, 348 residues long: Methylthioribose-1-phosphate isomerase (348 aa).

Substrate contacts are provided by residues 54-56, Arg96, and Gln199; that span reads RGA. The active-site Proton donor is the Asp240. Residue 250 to 251 participates in substrate binding; sequence NK.

It belongs to the eIF-2B alpha/beta/delta subunits family. MtnA subfamily.

It carries out the reaction 5-(methylsulfanyl)-alpha-D-ribose 1-phosphate = 5-(methylsulfanyl)-D-ribulose 1-phosphate. The protein operates within amino-acid biosynthesis; L-methionine biosynthesis via salvage pathway; L-methionine from S-methyl-5-thio-alpha-D-ribose 1-phosphate: step 1/6. Catalyzes the interconversion of methylthioribose-1-phosphate (MTR-1-P) into methylthioribulose-1-phosphate (MTRu-1-P). This is Methylthioribose-1-phosphate isomerase from Thioalkalivibrio sulfidiphilus (strain HL-EbGR7).